The primary structure comprises 535 residues: Formate--tetrahydrofolate ligase (535 aa).

An ATP-binding site is contributed by 50–57 (TPAGEGKT).

It belongs to the formate--tetrahydrofolate ligase family.

It catalyses the reaction (6S)-5,6,7,8-tetrahydrofolate + formate + ATP = (6R)-10-formyltetrahydrofolate + ADP + phosphate. It functions in the pathway one-carbon metabolism; tetrahydrofolate interconversion. This is Formate--tetrahydrofolate ligase from Picrophilus torridus (strain ATCC 700027 / DSM 9790 / JCM 10055 / NBRC 100828 / KAW 2/3).